The primary structure comprises 435 residues: rRNA methyltransferase 3A, mitochondrial (435 aa).

A mitochondrion-targeting transit peptide spans 1–42 (MAALMYNVSRGLVMLGERSLFQRERYQILVNSRRFLRGLRRR). Residues 314–324 (KQLVSGQTENV) are compositionally biased toward polar residues. The interval 314-351 (KQLVSGQTENVSSDDYSESDSDDDDDEEEDEDSLPHVK) is disordered. Positions 328 to 345 (DYSESDSDDDDDEEEDED) are enriched in acidic residues. S-adenosyl-L-methionine is bound by residues G369 and L402.

This sequence belongs to the class IV-like SAM-binding methyltransferase superfamily. RNA methyltransferase TrmH family.

The protein localises to the mitochondrion. It carries out the reaction a uridine in rRNA + S-adenosyl-L-methionine = a 2'-O-methyluridine in rRNA + S-adenosyl-L-homocysteine + H(+). Its function is as follows. S-adenosyl-L-methionine-dependent 2'-O-ribose methyltransferase that catalyzes the formation of 2'-O-methylguanosine at position 1485 (Gm1485) in the mitochondrial large subunit ribosomal RNA (mtLSU rRNA), a conserved modification in the peptidyl transferase domain of the mtLSU rRNA. Also required for formation of 2'-O-methyluridine at position 1484 (Um1484) mediated by MRM2. The protein is rRNA methyltransferase 3A, mitochondrial (mrm3a) of Danio rerio (Zebrafish).